The sequence spans 221 residues: Large ribosomal subunit protein uL3 (221 aa).

The protein belongs to the universal ribosomal protein uL3 family. In terms of assembly, part of the 50S ribosomal subunit. Forms a cluster with proteins L14 and L19.

In terms of biological role, one of the primary rRNA binding proteins, it binds directly near the 3'-end of the 23S rRNA, where it nucleates assembly of the 50S subunit. The protein is Large ribosomal subunit protein uL3 of Chlamydia trachomatis serovar A (strain ATCC VR-571B / DSM 19440 / HAR-13).